Here is a 526-residue protein sequence, read N- to C-terminus: MSLRNSTTAKRFHSHKTWAGTFWSRPSLYFQPASIEELQAIVTRARDLGKTIMVVGSAHSPSDLTMTSQWLVNLDKLSKAVSFKPHTSGLYTDVTVEAGIRIHQLNEVLKRKGLAMQNLGSISDQSVAGIISTGTHGSSAYHGLVSQQIVSLTIMIASGELLTCSPDENPTLFRAALLSLGKLGIIVYATLRTVPAYTIHSTQHVITFETLIREWDNLWTASEYIRVWWFPYAERCILWRASKSELPLSAPRPSWYGTWLGRLFYETLLWVSVRLWPSLTPSVERFIFSRQYGMEDTLGSGTGSEAVQGSVEGLNMDCLFSQFVNEWGMPLDNGPDVLRALRAKIEAAAKDNIYYVHSPVEVRCSNMSVPDSGDRNVEPNTQEFSASRRGAITGNTLRPLLDINPRDRPYASPHGHVTNSNLTLYINATMYRPFGVNSPVGKWYRDFEGIVAEAGGKPHWAKNFLGPETAELKDNESEDGKMLGLKPIIDEWYGDDLKQWKSLREKYDPTGVFLSGKVWMDRNGLL.

Residues 22-196 enclose the FAD-binding PCMH-type domain; sequence FWSRPSLYFQ…VYATLRTVPA (175 aa). A Pros-8alpha-FAD histidine modification is found at His59.

It belongs to the oxygen-dependent FAD-linked oxidoreductase family. It depends on FAD as a cofactor.

The protein localises to the mitochondrion membrane. It catalyses the reaction D-arabinono-1,4-lactone + O2 = dehydro-D-arabinono-1,4-lactone + H2O2 + H(+). It participates in cofactor biosynthesis; D-erythroascorbate biosynthesis; dehydro-D-arabinono-1,4-lactone from D-arabinose: step 2/2. This is D-arabinono-1,4-lactone oxidase (ALO1) from Yarrowia lipolytica (strain CLIB 122 / E 150) (Yeast).